Here is a 516-residue protein sequence, read N- to C-terminus: DNA topoisomerase large subunit (516 aa).

128–136 contacts ATP; the sequence is VTGGMNGVG. A DNA-binding region spans residues 369–400; that stretch reads AALARKLAAEKAAETKAAKKASKAKVHKHIKA.

The protein belongs to the type II topoisomerase family. Part of the DNA topoisomerase complex made of gp39, gp52 and gp60. Mg(2+) is required as a cofactor.

It catalyses the reaction ATP-dependent breakage, passage and rejoining of double-stranded DNA.. Large subunit of the DNA topoisomerase that untwists superhelical DNA. Controls of topological states of double-stranded DNA by transient breakage and subsequent rejoining of DNA strands. The protein is DNA topoisomerase large subunit (39) of Escherichia coli (Bacteriophage T4).